A 157-amino-acid chain; its full sequence is Transcription elongation factor GreA (157 aa).

Residues 9-30 (LEGAQQLKEELKRRKTTDRKRI) adopt a coiled-coil conformation.

This sequence belongs to the GreA/GreB family.

In terms of biological role, necessary for efficient RNA polymerase transcription elongation past template-encoded arresting sites. The arresting sites in DNA have the property of trapping a certain fraction of elongating RNA polymerases that pass through, resulting in locked ternary complexes. Cleavage of the nascent transcript by cleavage factors such as GreA or GreB allows the resumption of elongation from the new 3'terminus. GreA releases sequences of 2 to 3 nucleotides. This chain is Transcription elongation factor GreA, found in Magnetococcus marinus (strain ATCC BAA-1437 / JCM 17883 / MC-1).